Consider the following 518-residue polypeptide: Probable glycosyltransferase At5g03795 (518 aa).

Topologically, residues Met-1–Lys-25 are cytoplasmic. The chain crosses the membrane as a helical; Signal-anchor for type II membrane protein span at residues Leu-26–Pro-46. Residues Lys-47 to Val-518 are Lumenal-facing. N-linked (GlcNAc...) asparagine glycosylation is found at Asn-104, Asn-113, Asn-120, Asn-282, and Asn-320.

The protein belongs to the glycosyltransferase 47 family.

The protein resides in the golgi apparatus membrane. Functionally, may be involved in cell wall biosynthesis. The chain is Probable glycosyltransferase At5g03795 from Arabidopsis thaliana (Mouse-ear cress).